The primary structure comprises 58 residues: Ribulose bisphosphate carboxylase large chain (58 aa).

Positions 1–2 (MS) are excised as a propeptide. At P3 the chain carries N-acetylproline. K14 carries the post-translational modification N6,N6,N6-trimethyllysine.

It belongs to the RuBisCO large chain family. Type I subfamily. In terms of assembly, heterohexadecamer of 8 large chains and 8 small chains.

The protein localises to the plastid. It is found in the chloroplast. The catalysed reaction is 2 (2R)-3-phosphoglycerate + 2 H(+) = D-ribulose 1,5-bisphosphate + CO2 + H2O. It carries out the reaction D-ribulose 1,5-bisphosphate + O2 = 2-phosphoglycolate + (2R)-3-phosphoglycerate + 2 H(+). Its function is as follows. RuBisCO catalyzes two reactions: the carboxylation of D-ribulose 1,5-bisphosphate, the primary event in carbon dioxide fixation, as well as the oxidative fragmentation of the pentose substrate in the photorespiration process. Both reactions occur simultaneously and in competition at the same active site. The protein is Ribulose bisphosphate carboxylase large chain (rbcL) of Rosa damascena (Damask rose).